The sequence spans 252 residues: Oncostatin-M (252 aa).

Positions 1 to 25 are cleaved as a signal peptide; sequence MGVLLTQRTLLSLVLALLFPSMASM. Cystine bridges form between Cys31–Cys152 and Cys74–Cys192. Asn100 carries an N-linked (GlcNAc...) asparagine glycan. Disordered regions lie at residues 162–184 and 213–252; these read TAEPTKAGRGASQPPTPTPASDA and GESPNRSRRHSPHQALRKGVRRTRPSRKGKRLMTRGQLPR. The N-linked (GlcNAc...) asparagine glycan is linked to Asn217. Residues 218–245 show a composition bias toward basic residues; the sequence is RSRRHSPHQALRKGVRRTRPSRKGKRLM. A propeptide spanning residues 222–252 is cleaved from the precursor; the sequence is HSPHQALRKGVRRTRPSRKGKRLMTRGQLPR.

It belongs to the LIF/OSM family. In terms of processing, propeptide processing is not important for receptor binding activity but may be important growth-inhibitory activity.

The protein localises to the secreted. Functionally, growth regulator. Inhibits the proliferation of a number of tumor cell lines. Stimulates proliferation of AIDS-KS cells. It regulates cytokine production, including IL-6, G-CSF and GM-CSF from endothelial cells. Uses both type I OSM receptor (heterodimers composed of LIFR and IL6ST) and type II OSM receptor (heterodimers composed of OSMR and IL6ST). Involved in the maturation of fetal hepatocytes, thereby promoting liver development and regeneration. This Homo sapiens (Human) protein is Oncostatin-M (OSM).